The sequence spans 94 residues: Parvalbumin beta 4 (94 aa).

A1 is modified (N-acetylalanine). 2 EF-hand domains span residues F36 to G63 and L67 to A94. Residues D41, D43, S45, F47, E49, E52, D80, D82, D84, M86, and E91 each coordinate Ca(2+).

It belongs to the parvalbumin family.

Functionally, in muscle, parvalbumin is thought to be involved in relaxation after contraction. It binds two calcium ions. This is Parvalbumin beta 4 from Merluccius bilinearis (Silver hake).